The primary structure comprises 102 residues: Small ribosomal subunit protein uS14 (102 aa).

It belongs to the universal ribosomal protein uS14 family. In terms of assembly, part of the 30S ribosomal subunit. Contacts proteins S3 and S10.

In terms of biological role, binds 16S rRNA, required for the assembly of 30S particles and may also be responsible for determining the conformation of the 16S rRNA at the A site. The sequence is that of Small ribosomal subunit protein uS14 from Dichelobacter nodosus (strain VCS1703A).